Here is a 291-residue protein sequence, read N- to C-terminus: MKKKALLPLLLGVMVFLAGCDYSKSSNRDGFFYNTFVEPMSKVLHWLGHSVFNDDYGIAIIVLVLVIRIILLPFMLSNYKNSHLMREKMKVAKPEVDGVQEKVKRARTQEEKMAANQEMMEVYKKYDINPMKSALGCLPVLIQMPVVMGLYFVLRYRIGGGIAEHPHFLWFNLIHPDIWITIIAGVLYFIQAWVSSKQMPQEQRQMTYMMMIVSPIMIIWISLSSASALGLYWSVSAAFLVVQTYFANMYYEKVAQREVAPMIEKFKENNSNSNKKGKNTQVVSKNNKKKK.

Positions 1–19 are cleaved as a signal peptide; it reads MKKKALLPLLLGVMVFLAG. C20 is lipidated: N-palmitoyl cysteine. A lipid anchor (S-diacylglycerol cysteine) is attached at C20. 4 helical membrane passes run 56-76, 134-154, 170-190, and 211-231; these read YGIA…PFML, ALGC…YFVL, WFNL…LYFI, and MIVS…ALGL. A disordered region spans residues 266–291; sequence FKENNSNSNKKGKNTQVVSKNNKKKK.

The protein belongs to the OXA1/ALB3/YidC family. Type 2 subfamily.

The protein resides in the cell membrane. In terms of biological role, required for the insertion and/or proper folding and/or complex formation of integral membrane proteins into the membrane. Involved in integration of membrane proteins that insert both dependently and independently of the Sec translocase complex, as well as at least some lipoproteins. In Staphylococcus haemolyticus (strain JCSC1435), this protein is Membrane protein insertase YidC.